The chain runs to 713 residues: Mitochondrial intermediate peptidase (713 aa).

Residues 1–35 (MLCVGRLGGLGARAAALPPRRAGRGSLEAGIRARR) constitute a mitochondrion transit peptide. K126 carries the post-translational modification N6-acetyllysine. H495 serves as a coordination point for Zn(2+). E496 is an active-site residue. Residues H499 and H502 each coordinate Zn(2+).

It belongs to the peptidase M3 family. Monomer. Zn(2+) is required as a cofactor.

Its subcellular location is the mitochondrion matrix. It carries out the reaction Release of an N-terminal octapeptide as second stage of processing of some proteins imported into the mitochondrion.. With respect to regulation, activity is divalent cation-dependent. It is stimulated by manganese, magnesium or calcium ions and reversibly inhibited by zinc, cobalt and iron. In terms of biological role, cleaves proteins, imported into the mitochondrion, to their mature size. In Homo sapiens (Human), this protein is Mitochondrial intermediate peptidase (MIPEP).